We begin with the raw amino-acid sequence, 406 residues long: Elongation factor Tu-A (406 aa).

Positions 10–215 constitute a tr-type G domain; it reads KPHVNVGTIG…AIDEYIPTPV (206 aa). Positions 19-26 are G1; it reads GHVDHGKT. 19 to 26 contacts GTP; that stretch reads GHVDHGKT. Thr26 contacts Mg(2+). The tract at residues 61-65 is G2; sequence GITIN. Positions 82 to 85 are G3; that stretch reads DCPG. GTP contacts are provided by residues 82 to 86 and 137 to 140; these read DCPGH and NKVD. Residues 137 to 140 are G4; sequence NKVD. The G5 stretch occupies residues 175 to 177; the sequence is SAL. Thr395 carries the phosphothreonine modification.

The protein belongs to the TRAFAC class translation factor GTPase superfamily. Classic translation factor GTPase family. EF-Tu/EF-1A subfamily. In terms of assembly, monomer. Binds to the 70S ribosome, contacts tmRNA during trans-translation. In terms of processing, phosphorylated on a threonine.

It localises to the cytoplasm. The catalysed reaction is GTP + H2O = GDP + phosphate + H(+). Functionally, GTP hydrolase that promotes the GTP-dependent binding of aminoacyl-tRNA to the A-site of ribosomes during protein biosynthesis. EF-Tu-GDP binds to the acceptor arm of tmRNA by interacting with its acceptor arm, suggesting that GTP hydrolysis by EF-Tu is essential for tmRNA function. Its function is as follows. Protects glycyl-tRNA(Gly) from hydrolysis by E.coli D-aminoacyl-tRNA deacylase (dtd). This chain is Elongation factor Tu-A, found in Thermus thermophilus (strain ATCC 27634 / DSM 579 / HB8).